A 226-amino-acid chain; its full sequence is MTQHIVSGGPQVVDSESFSALTNVSRETLDRLLSYEALLRKWQKSINLVSNGSLPELWRRHMLDSAQLVCLVPESARRWIDLGSGGGFPGLVIAILLRERPGFQMHLVESDQRKCVFMREVARVTGAPATVHTVRIEAFAQGAEAGDVVSARALAPLDRLFGWAAPLFGPETIGLFLKGQGLQDELTLARESWIFDAEFSPSQSDPEGSVLKVRGLHGPDGQPHRR.

Residues glycine 83, phenylalanine 88, 136–137 (IE), and arginine 152 each bind S-adenosyl-L-methionine. The interval 199 to 226 (FSPSQSDPEGSVLKVRGLHGPDGQPHRR) is disordered.

It belongs to the methyltransferase superfamily. RNA methyltransferase RsmG family.

Its subcellular location is the cytoplasm. The catalysed reaction is guanosine(527) in 16S rRNA + S-adenosyl-L-methionine = N(7)-methylguanosine(527) in 16S rRNA + S-adenosyl-L-homocysteine. Specifically methylates the N7 position of guanine in position 527 of 16S rRNA. The protein is Ribosomal RNA small subunit methyltransferase G of Parvibaculum lavamentivorans (strain DS-1 / DSM 13023 / NCIMB 13966).